The primary structure comprises 550 residues: MPTDVEIAQAHTLEPITDIANRAGVPSDALIPYGFTKAKIDINRIASENTGKLVLVTGISPTPAGEGKSTVLIGLSDAMRLRGHNSIVAIREPSLGPVMGIKGGAAGGGYSQIVPMEDINLHFTGDFHAITAANNTLAAMIDNHIHQGNTLGIDVRRITWQRCLDVNDRCLRKVVTGLGGKAHGVPTETGFTITAASEIMAILCLALDLTDLEARLARIVVGQTFSSEPVTVGQLNAQGALAALLRDAVNPNLVQTLGGTPALCHGGPFANIAHGCNSLIATKTALSLGDVVLTEAGFGSDLGAEKFFDIKSRVGDLNVAATVVVATVRSLKYNAGVPKDELTTENLEALASGVVNLERHVENIRAFGIEPIVALNKFASDTDAEINQLKAWAETMSVQLIPVEVWAHGGQGALELADAVAVSMQNQTSHHLYDPELGIEASLLTIAQKIYGAADVELSKQARQDLAYLQENGWDRLPVCISKTQYSFSDDPSQLGRPEGHTLHVRNLLPRIGAGFIVALTGDVMTMPGLPKKPAAENIGVENGEIKGLF.

Residue 62 to 69 (TPAGEGKS) coordinates ATP.

This sequence belongs to the formate--tetrahydrofolate ligase family.

It carries out the reaction (6S)-5,6,7,8-tetrahydrofolate + formate + ATP = (6R)-10-formyltetrahydrofolate + ADP + phosphate. It functions in the pathway one-carbon metabolism; tetrahydrofolate interconversion. This is Formate--tetrahydrofolate ligase from Corynebacterium diphtheriae (strain ATCC 700971 / NCTC 13129 / Biotype gravis).